Reading from the N-terminus, the 71-residue chain is UPF0346 protein SPT_1257 (71 aa).

Belongs to the UPF0346 family.

The protein is UPF0346 protein SPT_1257 of Streptococcus pneumoniae (strain Taiwan19F-14).